The sequence spans 423 residues: Glutamate-1-semialdehyde 2,1-aminomutase (423 aa).

At Lys259 the chain carries N6-(pyridoxal phosphate)lysine.

It belongs to the class-III pyridoxal-phosphate-dependent aminotransferase family. HemL subfamily. In terms of assembly, homodimer. Pyridoxal 5'-phosphate is required as a cofactor.

It is found in the cytoplasm. It carries out the reaction (S)-4-amino-5-oxopentanoate = 5-aminolevulinate. It functions in the pathway porphyrin-containing compound metabolism; protoporphyrin-IX biosynthesis; 5-aminolevulinate from L-glutamyl-tRNA(Glu): step 2/2. In Thermosipho melanesiensis (strain DSM 12029 / CIP 104789 / BI429), this protein is Glutamate-1-semialdehyde 2,1-aminomutase.